A 206-amino-acid chain; its full sequence is CMP-5'-(N-acetyl-N-hydroxy-3-aminopropyl)phosphonate hydrolase (206 aa).

One can recognise a Nudix hydrolase domain in the interval valine 37–glycine 166. Residues glycine 74–glycine 95 carry the Nudix box motif. Positions arginine 177–glycine 194 are enriched in low complexity. Residues arginine 177–glycine 206 form a disordered region.

The protein belongs to the Nudix hydrolase family. Mg(2+) serves as cofactor.

The enzyme catalyses CMP-5'-(N-acetyl-N-hydroxy-3-aminopropyl)phosphonate + H2O = 3-(N-acetyl-N-hydroxy)aminopropylphosphonate + CMP + H(+). Its pathway is antibiotic biosynthesis. Functionally, nucleotide hydrolase involved in the biosynthesis of the phosphonate antibiotic FR-900098, a potent antimalarial agent that acts as an inhibitor of 1-deoxy-D-xylulose 5-phosphate reductoisomerase (DXR), the first enzyme in the nonmevalonate pathway for isoprenoid biosynthesis. Catalyzes the hydrolysis of CMP-5'-(N-acetyl-N-hydroxy-3-aminopropyl)phosphonate (CMP-5'-FR-900098) to produce CMP and the final compound FR-900098. In vitro, has broad substrate specificity and also catalyzes the hydrolysis of all the other CMP-containing intermediates within the pathway and shows low activity toward CTP. The protein is CMP-5'-(N-acetyl-N-hydroxy-3-aminopropyl)phosphonate hydrolase of Streptomyces rubellomurinus (strain ATCC 31215).